The primary structure comprises 200 residues: Holliday junction branch migration complex subunit RuvA (200 aa).

A domain I region spans residues 1–65; the sequence is MYEYIKGTLT…ETEHVLYGFS (65 aa). Positions 66–144 are domain II; that stretch reads SRAEKECFRL…TLMPLYLEEP (79 aa). The interval 145-149 is flexible linker; the sequence is VVPSS. Residues 150–200 are domain III; it reads TANSSFKEGIGALMNLGFSRLAADRMMTEAVKELSEEASVAELLPIALRKS.

Belongs to the RuvA family. Homotetramer. Forms an RuvA(8)-RuvB(12)-Holliday junction (HJ) complex. HJ DNA is sandwiched between 2 RuvA tetramers; dsDNA enters through RuvA and exits via RuvB. An RuvB hexamer assembles on each DNA strand where it exits the tetramer. Each RuvB hexamer is contacted by two RuvA subunits (via domain III) on 2 adjacent RuvB subunits; this complex drives branch migration. In the full resolvosome a probable DNA-RuvA(4)-RuvB(12)-RuvC(2) complex forms which resolves the HJ.

The protein resides in the cytoplasm. In terms of biological role, the RuvA-RuvB-RuvC complex processes Holliday junction (HJ) DNA during genetic recombination and DNA repair, while the RuvA-RuvB complex plays an important role in the rescue of blocked DNA replication forks via replication fork reversal (RFR). RuvA specifically binds to HJ cruciform DNA, conferring on it an open structure. The RuvB hexamer acts as an ATP-dependent pump, pulling dsDNA into and through the RuvAB complex. HJ branch migration allows RuvC to scan DNA until it finds its consensus sequence, where it cleaves and resolves the cruciform DNA. The polypeptide is Holliday junction branch migration complex subunit RuvA (Chlamydia trachomatis serovar A (strain ATCC VR-571B / DSM 19440 / HAR-13)).